A 103-amino-acid polypeptide reads, in one-letter code: Large ribosomal subunit protein bL21 (103 aa).

The protein belongs to the bacterial ribosomal protein bL21 family. Part of the 50S ribosomal subunit. Contacts protein L20.

This protein binds to 23S rRNA in the presence of protein L20. The chain is Large ribosomal subunit protein bL21 from Shewanella woodyi (strain ATCC 51908 / MS32).